Here is a 619-residue protein sequence, read N- to C-terminus: Eukaryotic translation initiation factor 2-alpha kinase 1 (619 aa).

A disordered region spans residues 1–40 (MLGGSSVDGERDTDDDAAGAVAAPPAIDFPAEVSDPKYDE). Residues 18 to 28 (AGAVAAPPAID) are compositionally biased toward low complexity. Residues 85-104 (LHSKQVFKLLCQTFIKMGLL) carry the SIFI-degron motif. A Protein kinase domain is found at 167–580 (FEELAILGKG…ALQLLQSELF (414 aa)). Residues 173-181 (LGKGGYGRV) and Lys-196 contribute to the ATP site. Thr-283 is modified (phosphothreonine). The HRM 1 repeat unit spans residues 408–413 (ACPYVM). Asp-440 acts as the Proton acceptor in catalysis. A phosphothreonine; by autocatalysis mark is found at Thr-483, Thr-485, and Thr-490. The stretch at 549-554 (RCPVQA) is one HRM 2 repeat.

Belongs to the protein kinase superfamily. Ser/Thr protein kinase family. GCN2 subfamily. As to quaternary structure, synthesized in an inactive form that binds to the N-terminal domain of CDC37. Has to be associated with a multiprotein complex containing Hsp90, CDC37 and PPP5C for maturation and activation by autophosphorylation. The phosphatase PPP5C modulates this activation. Homodimer; homodimerizes in presence of heme, forming a disulfide-linked inactive homodimer. Interacts with DELE1; binds both to full-length DELE1 and processed form of DELE1 (S-DELE1) in response to stress, leading to activate its protein kinase activity and trigger the integrated stress response (ISR). In terms of processing, activated by autophosphorylation; phosphorylated predominantly on serine and threonine residues, but also on tyrosine residues. Autophosphorylation at Thr-485 is required for kinase activation. The active autophosphorylated form apparently is largely refractory to cellular heme fluctuations. Post-translationally, ubiquitinated and degraded by the SIFI complex once the mitochondrial stress has been resolved, thereby providing stress response silencing. Within the SIFI complex, UBR4 initiates ubiquitin chain that are further elongated or branched by KCMF1. As to expression, expressed predominantly in erythroid cells, mature reticulocytes, as well as fetal liver nucleated erythroid cells. At much lower levels, expressed in hepatocytes and bone marrow-derived macrophages (at protein level).

The protein resides in the cytoplasm. It catalyses the reaction L-seryl-[protein] + ATP = O-phospho-L-seryl-[protein] + ADP + H(+). It carries out the reaction L-threonyl-[protein] + ATP = O-phospho-L-threonyl-[protein] + ADP + H(+). With respect to regulation, in normal conditions, the protein kinase activity is inhibited; inhibition is relieved by various stress conditions. Inhibited by heme: in presence of heme, forms a disulfide-linked inactive homodimer. Heme depletion relieves inhibition and stimulates kinase activity by autophosphorylation. Inhibited by the heme metabolites biliverdin and bilirubin. Induced by oxidative stress generated by arsenite treatment. Binding of nitric oxide (NO) to the heme iron in the N-terminal heme-binding domain activates the kinase activity, while binding of carbon monoxide (CO) suppresses kinase activity. Protein kinase activity is also activated upon binding to DELE1 in response to various stress, triggering the integrated stress response (ISR): activated by full-length DELE1 in response to iron deficiency, while it is activated by the processed form of DELE1 (S-DELE1) in response to mitochondrial stress. In terms of biological role, metabolic-stress sensing protein kinase that phosphorylates the alpha subunit of eukaryotic translation initiation factor 2 (EIF2S1/eIF-2-alpha) in response to various stress conditions. Key activator of the integrated stress response (ISR) required for adaptation to various stress, such as heme deficiency, oxidative stress, osmotic shock, mitochondrial dysfunction and heat shock. EIF2S1/eIF-2-alpha phosphorylation in response to stress converts EIF2S1/eIF-2-alpha in a global protein synthesis inhibitor, leading to a global attenuation of cap-dependent translation, while concomitantly initiating the preferential translation of ISR-specific mRNAs, such as the transcriptional activator ATF4, and hence allowing ATF4-mediated reprogramming. Acts as a key sensor of heme-deficiency: in normal conditions, binds hemin via a cysteine thiolate and histidine nitrogenous coordination, leading to inhibit the protein kinase activity. This binding occurs with moderate affinity, allowing it to sense the heme concentration within the cell: heme depletion relieves inhibition and stimulates kinase activity, activating the ISR. Thanks to this unique heme-sensing capacity, plays a crucial role to shut off protein synthesis during acute heme-deficient conditions. In red blood cells (RBCs), controls hemoglobin synthesis ensuring a coordinated regulation of the synthesis of its heme and globin moieties. It thereby plays an essential protective role for RBC survival in anemias of iron deficiency. Iron deficiency also triggers activation by full-length DELE1. Also activates the ISR in response to mitochondrial dysfunction: HRI/EIF2AK1 protein kinase activity is activated upon binding to the processed form of DELE1 (S-DELE1), thereby promoting the ATF4-mediated reprogramming. Also acts as an activator of mitophagy in response to mitochondrial damage: catalyzes phosphorylation of eIF-2-alpha (EIF2S1) following activation by S-DELE1, thereby promoting mitochondrial localization of EIF2S1, triggering PRKN-independent mitophagy. This is Eukaryotic translation initiation factor 2-alpha kinase 1 from Mus musculus (Mouse).